The sequence spans 121 residues: uncharacterized protein (121 aa).

Helical transmembrane passes span 16 to 36 (GFMV…GFAV) and 74 to 94 (LYIA…MKTI).

The protein resides in the cell membrane. This is an uncharacterized protein from Bacillus subtilis (strain 168).